A 363-amino-acid chain; its full sequence is Phosphoserine aminotransferase (363 aa).

Arginine 42 lines the L-glutamate pocket. Pyridoxal 5'-phosphate contacts are provided by residues 76 to 77 (GR), tryptophan 102, threonine 156, aspartate 175, and glutamine 198. Lysine 199 carries the N6-(pyridoxal phosphate)lysine modification. 240–241 (NT) is a pyridoxal 5'-phosphate binding site.

It belongs to the class-V pyridoxal-phosphate-dependent aminotransferase family. SerC subfamily. Homodimer. Pyridoxal 5'-phosphate is required as a cofactor.

The protein localises to the cytoplasm. The catalysed reaction is O-phospho-L-serine + 2-oxoglutarate = 3-phosphooxypyruvate + L-glutamate. The enzyme catalyses 4-(phosphooxy)-L-threonine + 2-oxoglutarate = (R)-3-hydroxy-2-oxo-4-phosphooxybutanoate + L-glutamate. The protein operates within amino-acid biosynthesis; L-serine biosynthesis; L-serine from 3-phospho-D-glycerate: step 2/3. Its pathway is cofactor biosynthesis; pyridoxine 5'-phosphate biosynthesis; pyridoxine 5'-phosphate from D-erythrose 4-phosphate: step 3/5. Catalyzes the reversible conversion of 3-phosphohydroxypyruvate to phosphoserine and of 3-hydroxy-2-oxo-4-phosphonooxybutanoate to phosphohydroxythreonine. The protein is Phosphoserine aminotransferase of Shewanella halifaxensis (strain HAW-EB4).